Consider the following 166-residue polypeptide: NADPH-dependent 7-cyano-7-deazaguanine reductase (166 aa).

C57 functions as the Thioimide intermediate in the catalytic mechanism. The active-site Proton donor is D64. Substrate contacts are provided by residues 79-81 (VES) and 98-99 (HE).

It belongs to the GTP cyclohydrolase I family. QueF type 1 subfamily.

Its subcellular location is the cytoplasm. It carries out the reaction 7-aminomethyl-7-carbaguanine + 2 NADP(+) = 7-cyano-7-deazaguanine + 2 NADPH + 3 H(+). Its pathway is tRNA modification; tRNA-queuosine biosynthesis. Functionally, catalyzes the NADPH-dependent reduction of 7-cyano-7-deazaguanine (preQ0) to 7-aminomethyl-7-deazaguanine (preQ1). This Staphylococcus saprophyticus subsp. saprophyticus (strain ATCC 15305 / DSM 20229 / NCIMB 8711 / NCTC 7292 / S-41) protein is NADPH-dependent 7-cyano-7-deazaguanine reductase.